We begin with the raw amino-acid sequence, 357 residues long: Peptide chain release factor 1 (357 aa).

Q236 is subject to N5-methylglutamine.

Belongs to the prokaryotic/mitochondrial release factor family. Post-translationally, methylated by PrmC. Methylation increases the termination efficiency of RF1.

It localises to the cytoplasm. In terms of biological role, peptide chain release factor 1 directs the termination of translation in response to the peptide chain termination codons UAG and UAA. The sequence is that of Peptide chain release factor 1 from Mycobacterium avium (strain 104).